The following is a 173-amino-acid chain: ATP-dependent protease subunit HslV (173 aa).

Thr-2 is a catalytic residue. Positions 157, 160, and 163 each coordinate Na(+).

Belongs to the peptidase T1B family. HslV subfamily. In terms of assembly, a double ring-shaped homohexamer of HslV is capped on each side by a ring-shaped HslU homohexamer. The assembly of the HslU/HslV complex is dependent on binding of ATP.

Its subcellular location is the cytoplasm. The catalysed reaction is ATP-dependent cleavage of peptide bonds with broad specificity.. With respect to regulation, allosterically activated by HslU binding. Functionally, protease subunit of a proteasome-like degradation complex believed to be a general protein degrading machinery. This chain is ATP-dependent protease subunit HslV, found in Nitrosomonas eutropha (strain DSM 101675 / C91 / Nm57).